The primary structure comprises 317 residues: 17-beta-hydroxysteroid dehydrogenase type 6 (317 aa).

Positions 1–17 (MWFYLVTLVGLYHLLRW) are cleaved as a signal peptide. 33-57 (FITGCDSGFGNLLARQLDRRGMRVL) lines the NAD(+) pocket. N-linked (GlcNAc...) asparagine glycans are attached at residues Asn71 and Asn161. Residue Ser164 coordinates substrate. The active-site Proton acceptor is Tyr176.

Belongs to the short-chain dehydrogenases/reductases (SDR) family. Detected in liver.

It is found in the microsome membrane. Its subcellular location is the early endosome membrane. The enzyme catalyses all-trans-retinol--[retinol-binding protein] + NAD(+) = all-trans-retinal--[retinol-binding protein] + NADH + H(+). The catalysed reaction is all-trans-retinol + NAD(+) = all-trans-retinal + NADH + H(+). It carries out the reaction androsterone + NAD(+) = 5alpha-androstan-3,17-dione + NADH + H(+). It catalyses the reaction testosterone + NAD(+) = androst-4-ene-3,17-dione + NADH + H(+). The enzyme catalyses 5alpha-androstane-3alpha,17beta-diol + NAD(+) = 17beta-hydroxy-5alpha-androstan-3-one + NADH + H(+). The catalysed reaction is 17beta-estradiol + NAD(+) = estrone + NADH + H(+). It carries out the reaction 17beta-estradiol + NADP(+) = estrone + NADPH + H(+). It catalyses the reaction 3alpha-hydroxy-5alpha-pregnan-20-one + NAD(+) = 5alpha-pregnane-3,20-dione + NADH + H(+). The enzyme catalyses 5alpha-androstane-3beta,17beta-diol + NAD(+) = 17beta-hydroxy-5alpha-androstan-3-one + NADH + H(+). The catalysed reaction is 3beta-hydroxy-5alpha-androstan-17-one + NAD(+) = 5alpha-androstan-3,17-dione + NADH + H(+). Inhibited by carbenoxolone and phenyl arsenoxide. Its function is as follows. NAD-dependent oxidoreductase with broad substrate specificity that shows both oxidative and reductive activity (in vitro). Has 17-beta-hydroxysteroid dehydrogenase activity towards various steroids (in vitro). Converts 5-alpha-androstan-3-alpha,17-beta-diol to androsterone and estradiol to estrone (in vitro). Has 3-alpha-hydroxysteroid dehydrogenase activity towards androsterone (in vitro). Has retinol dehydrogenase activity towards all-trans-retinol (in vitro). The sequence is that of 17-beta-hydroxysteroid dehydrogenase type 6 (Hsd17b6) from Mus musculus (Mouse).